The chain runs to 74 residues: MAPNIRKSHPLLKMINNSLIDLPAPSNISAWWNFGSLLAICLVTQILTGLLLAMHYTADTSLAFSSVAHTCRDV.

The helical transmembrane segment at 34-54 threads the bilayer; sequence FGSLLAICLVTQILTGLLLAM.

The protein belongs to the cytochrome b family. In terms of assembly, the cytochrome bc1 complex contains 11 subunits: 3 respiratory subunits (MT-CYB, CYC1 and UQCRFS1), 2 core proteins (UQCRC1 and UQCRC2) and 6 low-molecular weight proteins (UQCRH/QCR6, UQCRB/QCR7, UQCRQ/QCR8, UQCR10/QCR9, UQCR11/QCR10 and a cleavage product of UQCRFS1). This cytochrome bc1 complex then forms a dimer. Requires heme as cofactor.

The protein localises to the mitochondrion inner membrane. In terms of biological role, component of the ubiquinol-cytochrome c reductase complex (complex III or cytochrome b-c1 complex) that is part of the mitochondrial respiratory chain. The b-c1 complex mediates electron transfer from ubiquinol to cytochrome c. Contributes to the generation of a proton gradient across the mitochondrial membrane that is then used for ATP synthesis. In Anser caerulescens (Snow goose), this protein is Cytochrome b (MT-CYB).